The primary structure comprises 1409 residues: MKDLLKFLKQQSKTEEFNGIKIGLASPDLIRSWSFGEVKKPETINYRTFKPEREGLFCARIFGPVKDYECLCGKYKRLKHRGVICEKCGVEVTQTKVRRERMGHIDLASPVAHIWFLKSLPSRIGLMLDMTLRDIERVLYFESFVVIEPGMTSLERGQMLTEESYLDALEEYGDEFEAKMGAEAVLELLRAIELEKEIESLREELPSINSETRRKKMTKRLKLIEAFFHSGNKPEWMILKVLPVLPPDLRPLVPLDGGRFATSDLNDLYRRVINRNNRLKRLLDLAAPDIIVRNEKRMLQESVDALLDNGRRGRAITGSNKRPLKSLADMIKGKQGRFRQNLLGKRVDYSGRSVITVGPTLRLHQCGLPKKMALELFKPFIYGKLEGRGLATTIKAAKKMVEREVPEVWDVLDDVIREHPVMLNRAPTLHRLGIQAFEPVLIEGKAIQLHPLVCAAYNADFDGDQMAVHVPLTLEAQLEARSLMMSTNNILSPANGEPVITPSQDVVLGLYYASRKCVNGKGEGMVFESIDEVEKAYRTGFAAIHAQVKVRITETHIAENGERTEARRIVDTTVGRSLLSRVLPKGLSFDLVNQNMGKKQIGKLLNTCYRQLGLKDTVVFADQLMYAGFHYATVSGASVGIDDMVIPAAKYTLVADAEAEVLEIQEQFQSGLVTAGERYNKVIDIWASANEKISKAMMDNLSVETVINRDGEEEEQESFNSIYMMADSGARGSAAQIRQLAGMRGLMAKPDGSIIETPIVANFREGLNVSQYFISTHGARKGLADTALKTANSGYLTRRLVDVAQDLVVIEDDCGTFEGLTMKPLIEGGDVVEPLRERVLGRVVALDVFYPGTEKVLAPRNTLLDEAWCDTLEDNSIDEVIVRSVISCNTDFGVCKACYGRDLARGHIINQGEAIGVVAAQSIGEPGTQLNGWRTFHIGGAASRASAENNVQVKNAGTVKLHNAKHVTNSEGKLVIVSRSSEVAIIDELGREKERYKVPYGTILEKLEESIVTAGEIIANWDPHTHPIISEVAGTIKFVDMIEGVTMTRQTDDLTGLSSIVVMEVGQRPTAGKEMRPSIRLLDASGEDLKIPGTEVPAQYFLPGKAIVNQDDNAEINVGDALARIPQESSKTRDITGGLPRVADLFEARKPKEPAILAEYSGTISFGKETKGKRRLLITPADGGKPYEEMIPKWRNLNVFEGEKVERGEVIADGAEAAHDILRLRGIHKVANYIVNEVQDVYRLQGVKINDKHIEVIIRQMLRKCLITDAGDSQFLAGEQAEVARVKIANRELEAQGKKPATFDRELLGITKASLATESFISAASFQETTRVLTEAAVGGKSDKLRGLKENVIVGRLIPAGTGYAYHQKRNAALAAKASGKTSEQATTITASEAERNLADLLNLAGSSD.

Cys-70, Cys-72, Cys-85, and Cys-88 together coordinate Zn(2+). The Mg(2+) site is built by Asp-460, Asp-462, and Asp-464. Zn(2+) is bound by residues Cys-814, Cys-888, Cys-895, and Cys-898.

The protein belongs to the RNA polymerase beta' chain family. The RNAP catalytic core consists of 2 alpha, 1 beta, 1 beta' and 1 omega subunit. When a sigma factor is associated with the core the holoenzyme is formed, which can initiate transcription. It depends on Mg(2+) as a cofactor. The cofactor is Zn(2+).

It catalyses the reaction RNA(n) + a ribonucleoside 5'-triphosphate = RNA(n+1) + diphosphate. Functionally, DNA-dependent RNA polymerase catalyzes the transcription of DNA into RNA using the four ribonucleoside triphosphates as substrates. The chain is DNA-directed RNA polymerase subunit beta' from Shewanella violacea.